Reading from the N-terminus, the 193-residue chain is ER membrane protein complex subunit 4 (193 aa).

The next 2 membrane-spanning stretches (helical) occupy residues 91-111 (ILAY…TLML) and 137-157 (LWPA…IGVY).

This sequence belongs to the EMC4 family.

Its subcellular location is the endoplasmic reticulum membrane. This is ER membrane protein complex subunit 4 from Schizosaccharomyces pombe (strain 972 / ATCC 24843) (Fission yeast).